A 370-amino-acid chain; its full sequence is 4-hydroxy-3-methylbut-2-en-1-yl diphosphate synthase (flavodoxin) (370 aa).

4 residues coordinate [4Fe-4S] cluster: C270, C273, C305, and E312.

It belongs to the IspG family. It depends on [4Fe-4S] cluster as a cofactor.

The enzyme catalyses (2E)-4-hydroxy-3-methylbut-2-enyl diphosphate + oxidized [flavodoxin] + H2O + 2 H(+) = 2-C-methyl-D-erythritol 2,4-cyclic diphosphate + reduced [flavodoxin]. It participates in isoprenoid biosynthesis; isopentenyl diphosphate biosynthesis via DXP pathway; isopentenyl diphosphate from 1-deoxy-D-xylulose 5-phosphate: step 5/6. Functionally, converts 2C-methyl-D-erythritol 2,4-cyclodiphosphate (ME-2,4cPP) into 1-hydroxy-2-methyl-2-(E)-butenyl 4-diphosphate. This chain is 4-hydroxy-3-methylbut-2-en-1-yl diphosphate synthase (flavodoxin), found in Saccharophagus degradans (strain 2-40 / ATCC 43961 / DSM 17024).